The chain runs to 412 residues: uncharacterized protein (412 aa).

The first 21 residues, 1-21, serve as a signal peptide directing secretion; the sequence is MIIPMLRILLIVLFVLNLVTS. Disordered stretches follow at residues 85–134, 250–294, and 327–357; these read QPPA…STTT, STTE…TPGT, and VELG…HVRE. A compositionally biased stretch (low complexity) spans 88–105; sequence ASLTSLPAAPPSAQVAPP. A compositionally biased stretch (polar residues) spans 124–134; the sequence is TPQASISSTTT. Composition is skewed to low complexity over residues 250–259 and 266–293; these read STTENTTEQS and TTST…GTPG. Residues 330 to 347 are compositionally biased toward acidic residues; that stretch reads GEGDDDEENDDDSSEEEE. The segment covering 348–357 has biased composition (basic and acidic residues); the sequence is TKPPARHVRE. Positions 371-408 constitute a ShKT domain; the sequence is CDEEEDDKGKICKLWAAGGLCGTHKPTMFLFCRKTCLC.

This is an uncharacterized protein from Caenorhabditis elegans.